The following is a 107-amino-acid chain: U-scoloptoxin(18)-Er1a (107 aa).

Positions 1-21 (MQRFLCLVACSVVLLVLGIVA) are cleaved as a signal peptide.

Belongs to the scoloptoxin-18 family. Post-translationally, contains 5 disulfide bonds. Expressed by the venom gland.

It is found in the secreted. This chain is U-scoloptoxin(18)-Er1a, found in Ethmostigmus rubripes (Giant centipede).